The sequence spans 1138 residues: Transmembrane channel-like protein 3 (1138 aa).

Residues 1–15 are compositionally biased toward low complexity; that stretch reads MEAAPGTAAAAAKPA. Disordered stretches follow at residues 1–20 and 29–54; these read MEAA…SCKK and NIYT…DSQD. The Cytoplasmic segment spans residues 1–155; that stretch reads MEAAPGTAAA…VASYFIFLRW (155 aa). Residues 156 to 176 form a helical membrane-spanning segment; that stretch reads LFGINIVLTIMTGAFVVLPEL. The Extracellular portion of the chain corresponds to 177 to 202; sequence LAGAPFGSTVSKTIRQEDLKTAQDLD. A helical membrane pass occupies residues 203-223; sequence TIWSLGGYLQYSVLFYGYYGS. At 224 to 233 the chain is on the cytoplasmic side; the sequence is DRKIGKAGYR. Residues 234 to 254 traverse the membrane as a helical segment; that stretch reads LPLAYFLVGMAVFAYSFIILL. The Extracellular segment spans residues 255–327; that stretch reads KKMAKNSRMS…KNLAVTISLR (73 aa). N-linked (GlcNAc...) asparagine glycosylation is present at Asn272. A helical membrane pass occupies residues 328–348; that stretch reads IIANILVLLSLTGSIYIIYFV. The Cytoplasmic segment spans residues 349 to 369; the sequence is VDRSQKLENNKRELTLWEKNE. A helical membrane pass occupies residues 370-390; sequence VSVVVSLITMIAPSAFELVAA. Residues 391–401 lie on the Extracellular side of the membrane; it reads LEMYHPRTTLR. The chain crosses the membrane as a helical span at residues 402–422; it reads FQLARVLVLYLGNLYSLIIAL. Residues 423–508 are Cytoplasmic-facing; the sequence is LDKVNSMSVT…CWETYVGQEM (86 aa). A helical membrane pass occupies residues 509-529; sequence LKLSIIDMIFTVASILLIDFF. Topologically, residues 530–569 are extracellular; it reads RGLCVRYLSDCWCWDLESKFPEYGEFKIAENVLHLVYNQG. Residues 570 to 590 traverse the membrane as a helical segment; the sequence is MIWMGAFFSPCLPAFNVLKLI. Residues 591–618 lie on the Cytoplasmic side of the membrane; the sequence is GLMYLRSWAVLTCNVPHQQVFRASRSNN. A helical transmembrane segment spans residues 619-639; the sequence is FYLAMLLFMLFLCMLPTIFAI. The Extracellular segment spans residues 640–676; it reads ARYKPSLSCGPFSGQEKIYDIVSETIQNDFPAWFNSV. Residues 677 to 697 traverse the membrane as a helical segment; the sequence is IAYISSPVVVLPALLLLFMLI. Residues 698-1138 are Cytoplasmic-facing; that stretch reads YYLQSIARSL…EPNELVCSNV (441 aa). Over residues 753–763 the composition is skewed to polar residues; that stretch reads NSEGTRFQSLD. Disordered regions lie at residues 753–859, 973–1005, and 1065–1095; these read NSEG…RYPS, SPHP…DLRP, and PKTK…SSND. A compositionally biased stretch (basic and acidic residues) spans 764–773; it reads GSDKRPDKDG. Polar residues-rich tracts occupy residues 777–795 and 804–813; these read SQES…SVLN and TRIQTISQTV. The span at 828–845 shows a compositional bias: low complexity; it reads TTPTTSASLTPAPSVSSA. The span at 989-998 shows a compositional bias: basic residues; it reads HYVKRSHRPR. Over residues 1074-1095 the composition is skewed to low complexity; sequence SLTESDSVSIESSSDPQNSSND.

The protein belongs to the TMC family. In terms of tissue distribution, expressed in a range of tissues including cerebrum, cerebellum, retina, cochlea, lung, liver and heart. Also expressed in the apical, medial and basal portions of the basillar papilla.

The protein localises to the membrane. Its function is as follows. Probable component of an ion channel. This is Transmembrane channel-like protein 3 from Gallus gallus (Chicken).